The chain runs to 558 residues: 2-isopropylmalate synthase (558 aa).

Positions Pro-28–Asn-304 constitute a Pyruvate carboxyltransferase domain. Mg(2+) contacts are provided by Asp-37, His-243, His-245, and Asn-279. Positions Asn-438–Lys-558 are regulatory domain.

It belongs to the alpha-IPM synthase/homocitrate synthase family. LeuA type 2 subfamily. In terms of assembly, homodimer. The cofactor is Mg(2+).

It is found in the cytoplasm. The catalysed reaction is 3-methyl-2-oxobutanoate + acetyl-CoA + H2O = (2S)-2-isopropylmalate + CoA + H(+). The protein operates within amino-acid biosynthesis; L-leucine biosynthesis; L-leucine from 3-methyl-2-oxobutanoate: step 1/4. Functionally, catalyzes the condensation of the acetyl group of acetyl-CoA with 3-methyl-2-oxobutanoate (2-ketoisovalerate) to form 3-carboxy-3-hydroxy-4-methylpentanoate (2-isopropylmalate). In Clostridium acetobutylicum (strain ATCC 824 / DSM 792 / JCM 1419 / IAM 19013 / LMG 5710 / NBRC 13948 / NRRL B-527 / VKM B-1787 / 2291 / W), this protein is 2-isopropylmalate synthase.